A 399-amino-acid chain; its full sequence is RNA-binding protein cabeza (399 aa).

The segment covering 1 to 12 (MERGGYGGGSGQ) has biased composition (gly residues). The segment at 1–82 (MERGGYGGGS…RGGNSYGNGG (82 aa)) is disordered. Over residues 24-34 (YQQMPNKTGNY) the composition is skewed to polar residues. The segment covering 43–69 (KQGGGYDSGSGHRGSGGSGNGGGGGGS) has biased composition (gly residues). One can recognise an RRM domain in the interval 120 to 206 (DTIFVSGMDP…NAIKVSLAQR (87 aa)). Disordered stretches follow at residues 209-276 (NWNK…QPRD) and 300-399 (TPKG…SRPY). Over residues 212–271 (KGGGGGGGGGGRGGFGGRRGGGGGGGGGGGGGGRFDRGGGGGGGRYDRGGGGGGGGGGGN) the composition is skewed to gly residues. Residues 275 to 304 (RDGDWKCNSCNNTNFAWRNECNRCKTPKGD) form a RanBP2-type zinc finger. 3 stretches are compositionally biased toward gly residues: residues 308 to 339 (SSGG…GGGY), 347 to 361 (NSQG…GGGY), and 368 to 380 (NGGG…GGGG). Over residues 387–399 (PMRNDGGMRSRPY) the composition is skewed to low complexity.

Belongs to the RRM TET family. Ubiquitous. Enriched in the brain and central nervous system during embryogenesis. Enriched in the adult head. Embryos contain both isoforms A and B, whereas later in development (heads and torsos) only isoform B is detected.

Its subcellular location is the nucleus. Functionally, may participate in a function common to the expression of most genes transcribed by RNA polymerase II. The chain is RNA-binding protein cabeza (caz) from Drosophila melanogaster (Fruit fly).